A 458-amino-acid chain; its full sequence is Cysteine protease ATG4C (458 aa).

Position 1 is an N-acetylmethionine (Met1). The active-site Nucleophile is Cys111. Catalysis depends on residues Asp345 and His347. Position 451 is a phosphoserine (Ser451). Thr452 carries the post-translational modification Phosphothreonine.

It belongs to the peptidase C54 family.

It localises to the cytoplasm. The catalysed reaction is [protein]-C-terminal L-amino acid-glycyl-phosphatidylethanolamide + H2O = [protein]-C-terminal L-amino acid-glycine + a 1,2-diacyl-sn-glycero-3-phosphoethanolamine. Its activity is regulated as follows. Inhibited by N-ethylmaleimide. Functionally, cysteine protease that plays a key role in autophagy by mediating both proteolytic activation and delipidation of ATG8 family proteins. The protease activity is required for proteolytic activation of ATG8 family proteins: cleaves the C-terminal amino acid of ATG8 proteins MAP1LC3 and GABARAPL2, to reveal a C-terminal glycine. Exposure of the glycine at the C-terminus is essential for ATG8 proteins conjugation to phosphatidylethanolamine (PE) and insertion to membranes, which is necessary for autophagy. In addition to the protease activity, also mediates delipidation of ATG8 family proteins. Catalyzes delipidation of PE-conjugated forms of ATG8 proteins during macroautophagy. Compared to ATG4B, the major protein for proteolytic activation of ATG8 proteins, shows weaker ability to cleave the C-terminal amino acid of ATG8 proteins, while it displays stronger delipidation activity. In contrast to other members of the family, weakly or not involved in phagophore growth during mitophagy. This Mus musculus (Mouse) protein is Cysteine protease ATG4C.